Here is a 58-residue protein sequence, read N- to C-terminus: GSLLLVLFLLSVICYAEIAAGPTKCQYGRPCDSDRDCCWEYRCLSSGEEYTCKQDPGP.

The N-terminal stretch at 1-16 (GSLLLVLFLLSVICYA) is a signal peptide. A propeptide spanning residues 17–26 (EIAAGPTKCQ) is cleaved from the precursor. Disulfide bonds link C25/C38, C31/C43, and C37/C52.

This sequence belongs to the scorpion calcin-like family. KTX subfamily. In terms of tissue distribution, expressed by the venom gland.

Its subcellular location is the secreted. In terms of biological role, may inhibit voltage-gated potassium channels Kv1.1/KCNA1, hKv1.2/KCNA2, and Kv1.3/KCNA3. May also increase intracellular calcium release through the activation of nuclear inositol 1,4,5-trisphosphate receptors (ITPR) of cardiomyocytes, thereby causing an increase in the contraction frequency of these cells. The chain is Putative calcium channel toxin 196 from Lychas mucronatus (Chinese swimming scorpion).